Reading from the N-terminus, the 28-residue chain is Mu-theraphotoxin-Hsp1a (28 aa).

3 disulfide bridges follow: cysteine 2–cysteine 16, cysteine 9–cysteine 21, and cysteine 15–cysteine 25. Position 28 is an asparagine amide (asparagine 28).

This sequence belongs to the neurotoxin 30 (phrixotoxin) family. As to expression, expressed by the venom gland.

It localises to the secreted. Potent and selective inhibitor of Nav1.7/SCN9A sodium channels. Inhibits Nav1.7/SCN9A peak current (IC(50)=13 nM). In vivo, does not induce visible signs of toxicity when intravenously injected into mice. This chain is Mu-theraphotoxin-Hsp1a, found in Homoeomma sp. (Peruvian tarantula).